The primary structure comprises 116 residues: U30-theraphotoxin-Cg1a (116 aa).

Residues 1-17 form the signal peptide; that stretch reads MKLCVLTIASLLVTVTS. The propeptide occupies 18-53; sequence LETQKEIAEGSELTREETPSLVEHKEDEAAAASEKR. The disordered stretch occupies residues 24–46; that stretch reads IAEGSELTREETPSLVEHKEDEA. 4 disulfide bridges follow: Cys-55–Cys-69, Cys-62–Cys-75, Cys-66–Cys-112, and Cys-68–Cys-88.

It belongs to the neurotoxin 03 (Tx2) family. 02 subfamily. HNTX-XV sub-subfamily. In terms of tissue distribution, expressed by the venom gland.

The protein resides in the secreted. Probable ion channel inhibitor. The polypeptide is U30-theraphotoxin-Cg1a (Chilobrachys guangxiensis (Chinese earth tiger tarantula)).